A 124-amino-acid polypeptide reads, in one-letter code: Protein BEX3 (124 aa).

The interval 1-56 (MANVHQENEEMEQPLQNGQEDRPVGGGEGHQPAANNNNNNHNHNHNHHRRGQARRL) is disordered. Residues 42–53 (NHNHNHHRRGQA) show a composition bias toward basic residues. The tract at residues 81 to 106 (EMFMEEMREIRRKLRELQLRNCLRIL) is interaction with p75NTR/NGFR. The segment at 81–124 (EMFMEEMREIRRKLRELQLRNCLRILMGELSNHHDHHDEFCLMP) is interaction with 14-3-3 epsilon. The Nuclear export signal signature appears at 90 to 100 (IRRKLRELQLR). The his cluster stretch occupies residues 113–117 (HHDHH). Cys-121 is a Zn(2+) binding site.

The protein belongs to the BEX family. Self-associates. Binds to the DEATH domain of p75NTR/NGFR. Interacts with 14-3-3 epsilon (YWHAE). Interacts with DIABLO/SMAC. Ubiquitinated. Degraded by the proteasome. Widely expressed.

The protein localises to the nucleus. The protein resides in the cytoplasm. It is found in the cytosol. In terms of biological role, may be a signaling adapter molecule involved in NGFR/p75NTR-mediated apoptosis induced by NGF. Plays a role in zinc-triggered neuronal death. In absence of reductive stress, acts as a pseudosubstrate for the CRL2(FEM1B) complex: associates with FEM1B via zinc, thereby preventing association between FEM1B and its substrates. This chain is Protein BEX3, found in Mus musculus (Mouse).